The chain runs to 248 residues: Ubiquinone biosynthesis O-methyltransferase (248 aa).

S-adenosyl-L-methionine contacts are provided by Arg-41, Gly-72, Asp-93, and Met-136.

This sequence belongs to the methyltransferase superfamily. UbiG/COQ3 family.

The enzyme catalyses a 3-demethylubiquinol + S-adenosyl-L-methionine = a ubiquinol + S-adenosyl-L-homocysteine + H(+). It catalyses the reaction a 3-(all-trans-polyprenyl)benzene-1,2-diol + S-adenosyl-L-methionine = a 2-methoxy-6-(all-trans-polyprenyl)phenol + S-adenosyl-L-homocysteine + H(+). Its pathway is cofactor biosynthesis; ubiquinone biosynthesis. In terms of biological role, O-methyltransferase that catalyzes the 2 O-methylation steps in the ubiquinone biosynthetic pathway. The chain is Ubiquinone biosynthesis O-methyltransferase from Rhizobium rhizogenes (strain K84 / ATCC BAA-868) (Agrobacterium radiobacter).